We begin with the raw amino-acid sequence, 304 residues long: Glycine--tRNA ligase alpha subunit (304 aa).

This sequence belongs to the class-II aminoacyl-tRNA synthetase family. As to quaternary structure, tetramer of two alpha and two beta subunits.

Its subcellular location is the cytoplasm. It catalyses the reaction tRNA(Gly) + glycine + ATP = glycyl-tRNA(Gly) + AMP + diphosphate. The polypeptide is Glycine--tRNA ligase alpha subunit (Serratia proteamaculans (strain 568)).